A 177-amino-acid chain; its full sequence is tRNA (cytidine(56)-2'-O)-methyltransferase (177 aa).

S-adenosyl-L-methionine-binding positions include Leu84 and 109–113 (GAEKV).

The protein belongs to the aTrm56 family. As to quaternary structure, homodimer.

The protein localises to the cytoplasm. The catalysed reaction is cytidine(56) in tRNA + S-adenosyl-L-methionine = 2'-O-methylcytidine(56) in tRNA + S-adenosyl-L-homocysteine + H(+). Functionally, specifically catalyzes the AdoMet-dependent 2'-O-ribose methylation of cytidine at position 56 in tRNAs. This chain is tRNA (cytidine(56)-2'-O)-methyltransferase, found in Methanosarcina acetivorans (strain ATCC 35395 / DSM 2834 / JCM 12185 / C2A).